Here is a 259-residue protein sequence, read N- to C-terminus: Global transcriptional regulator CodY (259 aa).

The interval 1–155 (MDLLSRARKI…GATVVGMEIL (155 aa)) is GAF domain. The H-T-H motif DNA-binding region spans 203 to 222 (ASKIADRVGITRSVIVNALR). Serine 215 carries the post-translational modification Phosphoserine.

This sequence belongs to the CodY family.

It is found in the cytoplasm. In terms of biological role, DNA-binding global transcriptional regulator which is involved in the adaptive response to starvation and acts by directly or indirectly controlling the expression of numerous genes in response to nutrient availability. During rapid exponential growth, CodY is highly active and represses genes whose products allow adaptation to nutrient depletion. This Oceanobacillus iheyensis (strain DSM 14371 / CIP 107618 / JCM 11309 / KCTC 3954 / HTE831) protein is Global transcriptional regulator CodY.